Reading from the N-terminus, the 371-residue chain is UDP-N-acetylglucosamine--N-acetylmuramyl-(pentapeptide) pyrophosphoryl-undecaprenol N-acetylglucosamine transferase (371 aa).

UDP-N-acetyl-alpha-D-glucosamine is bound by residues 15–17 (TGG), Asn126, Arg172, Ser199, Ile256, 275–280 (ALTVSE), and Gln301.

It belongs to the glycosyltransferase 28 family. MurG subfamily.

It localises to the cell inner membrane. It catalyses the reaction di-trans,octa-cis-undecaprenyl diphospho-N-acetyl-alpha-D-muramoyl-L-alanyl-D-glutamyl-meso-2,6-diaminopimeloyl-D-alanyl-D-alanine + UDP-N-acetyl-alpha-D-glucosamine = di-trans,octa-cis-undecaprenyl diphospho-[N-acetyl-alpha-D-glucosaminyl-(1-&gt;4)]-N-acetyl-alpha-D-muramoyl-L-alanyl-D-glutamyl-meso-2,6-diaminopimeloyl-D-alanyl-D-alanine + UDP + H(+). Its pathway is cell wall biogenesis; peptidoglycan biosynthesis. Its function is as follows. Cell wall formation. Catalyzes the transfer of a GlcNAc subunit on undecaprenyl-pyrophosphoryl-MurNAc-pentapeptide (lipid intermediate I) to form undecaprenyl-pyrophosphoryl-MurNAc-(pentapeptide)GlcNAc (lipid intermediate II). The protein is UDP-N-acetylglucosamine--N-acetylmuramyl-(pentapeptide) pyrophosphoryl-undecaprenol N-acetylglucosamine transferase of Francisella tularensis subsp. tularensis (strain WY96-3418).